We begin with the raw amino-acid sequence, 119 residues long: uncharacterized protein (119 aa).

Residues Cys9 and Cys12 are joined by a disulfide bond.

Belongs to the ArsC family.

This is an uncharacterized protein from Streptomyces viridochromogenes.